We begin with the raw amino-acid sequence, 71 residues long: UPF0346 protein SSU05_1322 (71 aa).

Belongs to the UPF0346 family.

In Streptococcus suis (strain 05ZYH33), this protein is UPF0346 protein SSU05_1322.